The primary structure comprises 638 residues: 1-deoxy-D-xylulose-5-phosphate synthase (638 aa).

Thiamine diphosphate is bound by residues histidine 76 and 117-119 (AHS). A Mg(2+)-binding site is contributed by aspartate 148. Thiamine diphosphate is bound by residues 149 to 150 (GS), asparagine 177, tyrosine 287, and glutamate 369. Asparagine 177 contacts Mg(2+).

It belongs to the transketolase family. DXPS subfamily. Homodimer. The cofactor is Mg(2+). Thiamine diphosphate serves as cofactor.

The enzyme catalyses D-glyceraldehyde 3-phosphate + pyruvate + H(+) = 1-deoxy-D-xylulose 5-phosphate + CO2. Its pathway is metabolic intermediate biosynthesis; 1-deoxy-D-xylulose 5-phosphate biosynthesis; 1-deoxy-D-xylulose 5-phosphate from D-glyceraldehyde 3-phosphate and pyruvate: step 1/1. Its function is as follows. Catalyzes the acyloin condensation reaction between C atoms 2 and 3 of pyruvate and glyceraldehyde 3-phosphate to yield 1-deoxy-D-xylulose-5-phosphate (DXP). This is 1-deoxy-D-xylulose-5-phosphate synthase from Rhodopseudomonas palustris (strain HaA2).